The primary structure comprises 983 residues: 3',5'-cyclic-AMP phosphodiesterase, isoforms N/G (983 aa).

Disordered regions lie at residues 31 to 333 (MPEG…SAGL), 349 to 370 (SDSD…ASES), 400 to 429 (VPAS…LSQG), and 528 to 566 (SAGQ…RLPT). Over residues 35–50 (GEDHRGDLNQKGENNN) the composition is skewed to basic and acidic residues. Residues 51–60 (RPRPSISLAN) show a composition bias toward polar residues. A compositionally biased stretch (gly residues) spans 84-97 (SVGGGDSDGGGEAI). Composition is skewed to low complexity over residues 112 to 121 (LSTTTSNSSS) and 145 to 167 (QLQQ…SQRS). Over residues 174–199 (AEGEEFDVDPMDEDDEDQTYDRETEE) the composition is skewed to acidic residues. Composition is skewed to low complexity over residues 219-234 (SSLF…TTSS) and 248-261 (AASI…SDLM). 3 stretches are compositionally biased toward polar residues: residues 268-287 (STAT…SQRR), 358-368 (KSMSRNSSIAS), and 401-419 (PASN…SRSG). Residues 569 to 898 (VETPRENELG…DYYQSMIPPS (330 aa)) enclose the PDEase domain. His645 serves as the catalytic Proton donor. A 3',5'-cyclic AMP-binding site is contributed by 645 to 649 (HNSLH). A divalent metal cation is bound by residues His649, His685, Asp686, and Asp803. Asp686, Asp803, and Gln854 together coordinate 3',5'-cyclic AMP. Over residues 920–937 (EESDQENLAELEEGDESG) the composition is skewed to acidic residues. The segment at 920-983 (EESDQENLAE…CQNQPQHGGM (64 aa)) is disordered. Residues 938–955 (GESTTTGTTGTTAASALS) are compositionally biased toward low complexity. Residues 956-967 (GAGGGGGGGGGM) are compositionally biased toward gly residues. Polar residues predominate over residues 973-983 (GCQNQPQHGGM).

Belongs to the cyclic nucleotide phosphodiesterase family. PDE4 subfamily. As to quaternary structure, monomer. The cofactor is a divalent metal cation.

It carries out the reaction 3',5'-cyclic AMP + H2O = AMP + H(+). Its pathway is purine metabolism; 3',5'-cyclic AMP degradation; AMP from 3',5'-cyclic AMP: step 1/1. In terms of biological role, hydrolyzes the second messenger cAMP, which is a key regulator of many important physiological processes. Vital for female fertility. Required for learning/memory. This is 3',5'-cyclic-AMP phosphodiesterase, isoforms N/G from Drosophila melanogaster (Fruit fly).